Reading from the N-terminus, the 616-residue chain is Protein SpAN (616 aa).

Positions 1–16 (MKLVLLLAGFAALAKC) are cleaved as a signal peptide. Positions 17–93 (SLAAPAGVQK…DQKAGRKKRK (77 aa)) are cleaved as a propeptide — activation peptide. The disordered stretch occupies residues 30–67 (METSAPEKPSEATTLGLLKTPKPEPKDEEPSPGAFQGD). The Peptidase M12A domain maps to 93–294 (KATIYESQRW…ELANRIYECD (202 aa)). 6 disulfide bridges follow: Cys-134–Cys-293, Cys-162–Cys-182, Cys-299–Cys-317, Cys-319–Cys-328, Cys-340–Cys-366, and Cys-393–Cys-413. Position 190 (His-190) interacts with Zn(2+). Residue Glu-191 is part of the active site. 2 residues coordinate Zn(2+): His-194 and His-200. One can recognise an EGF-like domain in the interval 289–329 (RIYECDDVEDCSNADECLNGGYHDADCDCVCPSSYSGDLCQ). The 111-residue stretch at 340-450 (CSYRFTEMTG…RGFKATYVII (111 aa)) folds into the CUB 1 domain. A disordered region spans residues 461–491 (TLQTTPPSTTTLQTTNPSTTTLQTTNPSTTT). Disulfide bonds link Cys-503–Cys-529 and Cys-556–Cys-576. A CUB 2 domain is found at 503–614 (CGGTFVGVEG…RGFVASYRAI (112 aa)).

Zn(2+) serves as cofactor. Asymmetrically along the animal-vegetal axis of the blastula.

The protein is Protein SpAN (SPAN) of Strongylocentrotus purpuratus (Purple sea urchin).